A 1320-amino-acid chain; its full sequence is Tetratricopeptide repeat protein 21A (1320 aa).

19 TPR repeats span residues 4–38, 110–143, 146–180, 181–213, 215–247, 334–367, 502–534, 572–605, 728–761, 762–795, 797–828, 837–869, 889–922, 924–956, 957–990, 1028–1061, 1201–1234, 1236–1268, and 1270–1303; these read NDSS…FSND, GTAL…SRGF, AYVL…TKDV, LGLM…SGSF, PALV…DESN, VHVA…DKDG, IDPL…DPAS, PLYH…PALK, PHTS…NPHD, ASLA…NGQD, LCCD…DIVQ, VKCL…QSRI, ASIC…LPTD, KVML…EQNH, ETAS…APDN, PGFN…STWG, EKSW…NKSC, KAYE…SHHA, and PAIG…HPDY.

The protein belongs to the TTC21 family. Interacts with IFT20. Interacts with IFT52. Interacts with IFT140. Interacts with CEP78; regulating IFT20 stability and localization. Strongly expressed in testis.

Functionally, intraflagellar transport (IFT)-associated protein required for spermatogenesis. Required for sperm flagellar formation and intraflagellar transport. The chain is Tetratricopeptide repeat protein 21A from Homo sapiens (Human).